Reading from the N-terminus, the 196-residue chain is GTP cyclohydrolase-2 (196 aa).

49–53 contributes to the GTP binding site; it reads RVHSE. Residues C54, C65, and C67 each coordinate Zn(2+). GTP is bound by residues Q70, 92-94, and T114; that span reads EGR. The active-site Proton acceptor is D126. Catalysis depends on R128, which acts as the Nucleophile. The GTP site is built by T149 and K154.

Belongs to the GTP cyclohydrolase II family. Homodimer. Requires Zn(2+) as cofactor.

The catalysed reaction is GTP + 4 H2O = 2,5-diamino-6-hydroxy-4-(5-phosphoribosylamino)-pyrimidine + formate + 2 phosphate + 3 H(+). It participates in cofactor biosynthesis; riboflavin biosynthesis; 5-amino-6-(D-ribitylamino)uracil from GTP: step 1/4. Catalyzes the conversion of GTP to 2,5-diamino-6-ribosylamino-4(3H)-pyrimidinone 5'-phosphate (DARP), formate and pyrophosphate. This Shigella boydii serotype 18 (strain CDC 3083-94 / BS512) protein is GTP cyclohydrolase-2.